A 277-amino-acid chain; its full sequence is Digeranylgeranylglyceryl phosphate synthase (277 aa).

Helical transmembrane passes span 16–36, 40–60, 93–113, 129–149, 153–173, 199–218, 222–244, and 253–273; these read ILAGIVGILGSLVAYEGIPPV, ILIFLVVYFGCSAGNTINDYF, FIGLIIALLLGWSAFLFALGA, FIGNVTVALLTAATPIYGAVG, IDLAGYLAICAFLVNVSREIM, SGIIASIFGFLTIISSFLPV, IGLGYLPIIIVDIMIAKASIDVL, and GQKILKFATFIAVISFLLGAL.

It belongs to the UbiA prenyltransferase family. DGGGP synthase subfamily. The cofactor is Mg(2+).

The protein localises to the cell membrane. The catalysed reaction is sn-3-O-(geranylgeranyl)glycerol 1-phosphate + (2E,6E,10E)-geranylgeranyl diphosphate = 2,3-bis-O-(geranylgeranyl)-sn-glycerol 1-phosphate + diphosphate. It participates in membrane lipid metabolism; glycerophospholipid metabolism. Functionally, prenyltransferase that catalyzes the transfer of the geranylgeranyl moiety of geranylgeranyl diphosphate (GGPP) to the C2 hydroxyl of (S)-3-O-geranylgeranylglyceryl phosphate (GGGP). This reaction is the second ether-bond-formation step in the biosynthesis of archaeal membrane lipids. In Pyrococcus horikoshii (strain ATCC 700860 / DSM 12428 / JCM 9974 / NBRC 100139 / OT-3), this protein is Digeranylgeranylglyceryl phosphate synthase.